Consider the following 130-residue polypeptide: Small ribosomal subunit protein uS9 (130 aa).

Belongs to the universal ribosomal protein uS9 family.

This chain is Small ribosomal subunit protein uS9, found in Aeromonas salmonicida (strain A449).